The sequence spans 679 residues: Stress-70 protein, mitochondrial (679 aa).

A mitochondrion-targeting transit peptide spans 1–46 (MISASRAAAARLVGTAASRSPAAARPQDGWNGLSHEAFRFVSRRDY). The interaction with NFS1 stretch occupies residues 1–432 (MISASRAAAA…IQGGVLAGDV (432 aa)). ADP-binding residues include threonine 63 and asparagine 64. The tract at residues 63–431 (TNSCVAVMEG…AIQGGVLAGD (369 aa)) is nucleotide-binding domain (NBD). N6-acetyllysine is present on lysine 76. Residue threonine 87 is modified to Phosphothreonine. Residues lysine 135 and lysine 138 each carry the N6-acetyllysine; alternate modification. 2 positions are modified to N6-succinyllysine; alternate: lysine 135 and lysine 138. Lysine 143 is subject to N6-acetyllysine. Lysine 206 is modified (N6-acetyllysine; alternate). Residue lysine 206 is modified to N6-succinyllysine; alternate. Lysine 206 carries the post-translational modification N6-malonyllysine; alternate. Lysine 234 and lysine 288 each carry N6-acetyllysine. Lysine 300 is modified (N6-acetyllysine; alternate). Residue lysine 300 is modified to N6-succinyllysine; alternate. The ADP site is built by glutamate 313, lysine 316, and serine 320. Position 360 is an N6-acetyllysine; alternate (lysine 360). Lysine 360 is modified (N6-succinyllysine; alternate). Lysine 368 carries the N6-succinyllysine modification. Positions 388 and 391 each coordinate ADP. N6-succinyllysine is present on lysine 394. Phosphoserine is present on serine 408. The interdomain linker stretch occupies residues 432-441 (VTDVLLLDVT). Residues 432-679 (VTDVLLLDVT…QKEDQKEEKQ (248 aa)) are interaction with FXN and ISCU. The tract at residues 442 to 679 (PLSLGIETLG…QKEDQKEEKQ (238 aa)) is substrate-binding domain (SBD). Arginine 513 is modified (omega-N-methylarginine). N6-acetyllysine; alternate is present on residues lysine 567 and lysine 600. N6-succinyllysine; alternate occurs at positions 567 and 600. Lysine 610 is modified (N6-succinyllysine). At lysine 612 the chain carries N6-acetyllysine. N6-acetyllysine; alternate is present on lysine 646. N6-succinyllysine; alternate is present on lysine 646. The disordered stretch occupies residues 656–679 (ASEREGSGSSGTGEQKEDQKEEKQ). Residues 669-679 (EQKEDQKEEKQ) are compositionally biased toward basic and acidic residues.

This sequence belongs to the heat shock protein 70 family. Interacts strongly with the intermediate form of FXN and weakly with its mature form. Interacts with HSCB. Associates with the mitochondrial contact site and cristae organizing system (MICOS) complex, composed of at least MICOS10/MIC10, CHCHD3/MIC19, CHCHD6/MIC25, APOOL/MIC27, IMMT/MIC60, APOO/MIC23/MIC26 and QIL1/MIC13. This complex was also known under the names MINOS or MitOS complex. The MICOS complex associates with mitochondrial outer membrane proteins SAMM50, MTX1, MTX2 and DNAJC11, mitochondrial inner membrane protein TMEM11 and with HSPA9. Interacts with DNLZ, the interaction is required to prevent self-aggregation. Interacts with TESPA1. Interacts with PDPN. Interacts with NFU1, NFS1 and ISCU. Interacts with TP53; the interaction promotes TP53 degradation. Interacts (via SBD domain) with UBXN2A; the interaction with UBXN2A inhibits HSPA9/MOT-2 interaction with and degradation of TP53, thereby promotes TP53 translocation to the nucleus. Interacts with ITPR1 AND VDAC1; this interaction couples ITPR1 to VDAC1. Component of the TIM23 mitochondrial inner membrane pre-sequence translocase complex.

It localises to the mitochondrion. The protein resides in the nucleus. It is found in the nucleolus. The protein localises to the cytoplasm. Its subcellular location is the mitochondrion matrix. It catalyses the reaction ATP + H2O = ADP + phosphate + H(+). The chaperone activity is regulated by ATP-induced allosteric coupling of the nucleotide-binding (NBD) and substrate-binding (SBD) domains. ATP binding in the NBD leads to a conformational change in the NBD, which is transferred through the interdomain linker (IDL) to the substrate-binding domain (SBD). This elicits a reduced substrate affinity and a faster substrate exchange rate. Upon hydrolysis of ATP to ADP, the protein undergoes a conformational change that increases its affinity for substrate proteins. It cycles through repeated phases of ATP hydrolysis and nucleotide exchange, facilitating repeated cycles of substrate binding and release. Functions in collaboration with co-chaperones. Functions with the co-chaperone, DNLZ, to maintain solubility and regulate ATP hydrolysis. Nucleotide exchange factors, GRPEL1 and GRPEL2, accelerate nucleotide exchange. In terms of biological role, mitochondrial chaperone that plays a key role in mitochondrial protein import, folding, and assembly. Plays an essential role in the protein quality control system, the correct folding of proteins, the re-folding of misfolded proteins, and the targeting of proteins for subsequent degradation. These processes are achieved through cycles of ATP binding, ATP hydrolysis, and ADP release, mediated by co-chaperones. In mitochondria, it associates with the TIM (translocase of the inner membrane) protein complex to assist in the import and folding of mitochondrial proteins. Plays an important role in mitochondrial iron-sulfur cluster (ISC) biogenesis. Interacts with and stabilizes ISC cluster assembly proteins FXN, NFU1, NFS1 and ISCU. Regulates erythropoiesis via stabilization of ISC assembly. Regulates mitochondrial calcium-dependent apoptosis by coupling two calcium channels, ITPR1 and VDAC1, at the mitochondria-associated endoplasmic reticulum (ER) membrane to facilitate calcium transport from the ER lumen to the mitochondria intermembrane space, providing calcium for the downstream calcium channel MCU, which releases it into the mitochondrial matrix. Although primarily located in the mitochondria, it is also found in other cellular compartments. In the cytosol, it associates with proteins involved in signaling, apoptosis, or senescence. It may play a role in cell cycle regulation via its interaction with and promotion of degradation of TP53. May play a role in the control of cell proliferation and cellular aging. Protects against reactive oxygen species (ROS). Extracellular HSPA9 plays a cytoprotective role by preventing cell lysis following immune attack by the membrane attack complex by disrupting formation of the complex. This chain is Stress-70 protein, mitochondrial, found in Mus musculus (Mouse).